The primary structure comprises 293 residues: Elongation factor Ts (293 aa).

Residues 80-83 (TDFV) form an involved in Mg(2+) ion dislocation from EF-Tu region.

Belongs to the EF-Ts family.

The protein localises to the cytoplasm. Associates with the EF-Tu.GDP complex and induces the exchange of GDP to GTP. It remains bound to the aminoacyl-tRNA.EF-Tu.GTP complex up to the GTP hydrolysis stage on the ribosome. The polypeptide is Elongation factor Ts (Burkholderia multivorans (strain ATCC 17616 / 249)).